The following is a 610-amino-acid chain: Elongation factor 4 (610 aa).

In terms of domain architecture, tr-type G spans 13-195 (SHIRNFSIVA…AIVHKLPAPK (183 aa)). Residues 25 to 30 (DHGKST) and 142 to 145 (NKID) contribute to the GTP site.

This sequence belongs to the TRAFAC class translation factor GTPase superfamily. Classic translation factor GTPase family. LepA subfamily.

The protein resides in the cell inner membrane. It carries out the reaction GTP + H2O = GDP + phosphate + H(+). Its function is as follows. Required for accurate and efficient protein synthesis under certain stress conditions. May act as a fidelity factor of the translation reaction, by catalyzing a one-codon backward translocation of tRNAs on improperly translocated ribosomes. Back-translocation proceeds from a post-translocation (POST) complex to a pre-translocation (PRE) complex, thus giving elongation factor G a second chance to translocate the tRNAs correctly. Binds to ribosomes in a GTP-dependent manner. This chain is Elongation factor 4, found in Rhizobium etli (strain ATCC 51251 / DSM 11541 / JCM 21823 / NBRC 15573 / CFN 42).